The chain runs to 397 residues: Beta sliding clamp (397 aa).

This sequence belongs to the beta sliding clamp family. As to quaternary structure, forms a ring-shaped head-to-tail homodimer around DNA which binds and tethers DNA polymerases and other proteins to the DNA. The DNA replisome complex has a single clamp-loading complex (3 tau and 1 each of delta, delta', psi and chi subunits) which binds 3 Pol III cores (1 core on the leading strand and 2 on the lagging strand) each with a beta sliding clamp dimer. Additional proteins in the replisome are other copies of gamma, psi and chi, Ssb, DNA helicase and RNA primase.

It is found in the cytoplasm. Functionally, confers DNA tethering and processivity to DNA polymerases and other proteins. Acts as a clamp, forming a ring around DNA (a reaction catalyzed by the clamp-loading complex) which diffuses in an ATP-independent manner freely and bidirectionally along dsDNA. Initially characterized for its ability to contact the catalytic subunit of DNA polymerase III (Pol III), a complex, multichain enzyme responsible for most of the replicative synthesis in bacteria; Pol III exhibits 3'-5' exonuclease proofreading activity. The beta chain is required for initiation of replication as well as for processivity of DNA replication. This Mycolicibacterium smegmatis (strain ATCC 700084 / mc(2)155) (Mycobacterium smegmatis) protein is Beta sliding clamp (dnaN).